Here is a 332-residue protein sequence, read N- to C-terminus: Geranylgeranyl pyrophosphate synthase dpasD (332 aa).

Residues lysine 55, arginine 58, and histidine 87 each coordinate isopentenyl diphosphate. 2 residues coordinate Mg(2+): aspartate 94 and aspartate 98. Arginine 103 lines the dimethylallyl diphosphate pocket. Arginine 104 is a binding site for isopentenyl diphosphate. Positions 181, 182, and 215 each coordinate dimethylallyl diphosphate. Mg(2+) is bound at residue aspartate 218. Residues asparagine 222, lysine 232, and lysine 242 each contribute to the dimethylallyl diphosphate site.

Belongs to the FPP/GGPP synthase family. The cofactor is Mg(2+).

It carries out the reaction isopentenyl diphosphate + dimethylallyl diphosphate = (2E)-geranyl diphosphate + diphosphate. The enzyme catalyses isopentenyl diphosphate + (2E)-geranyl diphosphate = (2E,6E)-farnesyl diphosphate + diphosphate. It catalyses the reaction isopentenyl diphosphate + (2E,6E)-farnesyl diphosphate = (2E,6E,10E)-geranylgeranyl diphosphate + diphosphate. Its pathway is secondary metabolite biosynthesis; terpenoid biosynthesis. Geranylgeranyl pyrophosphate synthase; part of the gene cluster that mediates the biosynthesis of the diterpenoid pyrones subglutinols A and B. The first step of the pathway is the synthesis of the alpha-pyrone moiety by the polyketide synthase dpasA via condensation of one acetyl-CoA starter unit with 3 malonyl-CoA units and 2 methylations. The alpha-pyrone is then combined with geranylgeranyl pyrophosphate (GGPP) formed by the GGPP synthase dpasD through the action of the prenyltransferase dpasC to yield a linear alpha-pyrone diterpenoid. Subsequent steps in the diterpenoid pyrone biosynthetic pathway involve the decalin core formation, which is initiated by the epoxidation of the C10-C11 olefin by the FAD-dependent oxidoreductase dpasE, and is followed by a cyclization cascade catalyzed by the terpene cyclase dpasB. The FAD-linked oxidoreductase dpasF is then involved in tetrahydrofuran (THF) ring formation at the C5 unit to complete the formation of subglutinols A and B. DpasF also possesses an additional catalytic ability of multi-step oxidations to generate a new DDP analog with an enone system at the C5 named FDDP A. This is Geranylgeranyl pyrophosphate synthase dpasD from Apiospora sacchari (Arthrinium sacchari).